A 101-amino-acid polypeptide reads, in one-letter code: NADH-quinone oxidoreductase subunit K (101 aa).

3 helical membrane-spanning segments follow: residues 4–24, 30–50, and 61–81; these read LTHFLVLAAILFAISVLGIFL, IILLMAIELMLLAVNFNFIAF, and IFVFFILTVAAAESAIGLAIL.

Belongs to the complex I subunit 4L family. In terms of assembly, NDH-1 is composed of 14 different subunits. Subunits NuoA, H, J, K, L, M, N constitute the membrane sector of the complex.

Its subcellular location is the cell inner membrane. It carries out the reaction a quinone + NADH + 5 H(+)(in) = a quinol + NAD(+) + 4 H(+)(out). Its function is as follows. NDH-1 shuttles electrons from NADH, via FMN and iron-sulfur (Fe-S) centers, to quinones in the respiratory chain. The immediate electron acceptor for the enzyme in this species is believed to be ubiquinone. Couples the redox reaction to proton translocation (for every two electrons transferred, four hydrogen ions are translocated across the cytoplasmic membrane), and thus conserves the redox energy in a proton gradient. The chain is NADH-quinone oxidoreductase subunit K from Chromobacterium violaceum (strain ATCC 12472 / DSM 30191 / JCM 1249 / CCUG 213 / NBRC 12614 / NCIMB 9131 / NCTC 9757 / MK).